Here is a 200-residue protein sequence, read N- to C-terminus: Beta-1,6-glucan synthesis-associated protein KEG1 (200 aa).

Residues methionine 1–glutamine 15 lie on the Lumenal side of the membrane. The helical transmembrane segment at leucine 16–valine 36 threads the bilayer. Topologically, residues glycine 37 to glycine 44 are cytoplasmic. The chain crosses the membrane as a helical span at residues isoleucine 45 to leucine 65. The Lumenal segment spans residues arginine 66–aspartate 82. The helical transmembrane segment at leucine 83–isoleucine 103 threads the bilayer. The Cytoplasmic segment spans residues leucine 104–threonine 145. Residues phenylalanine 146–valine 166 form a helical membrane-spanning segment. Residues lysine 167 to proline 173 lie on the Lumenal side of the membrane. The chain crosses the membrane as a helical span at residues threonine 174–tyrosine 194. Residues lysine 195–lysine 200 lie on the Cytoplasmic side of the membrane.

In terms of assembly, interacts with KRE6.

Its subcellular location is the endoplasmic reticulum membrane. Functionally, involved in the biosynthesis of (1-&gt;6)-beta-D-glucan polymers of the cell wall. Required for viability. Involved in maintaining chromosome stability. This Saccharomyces cerevisiae (strain ATCC 204508 / S288c) (Baker's yeast) protein is Beta-1,6-glucan synthesis-associated protein KEG1 (KEG1).